A 298-amino-acid chain; its full sequence is ATP synthase gamma chain (298 aa).

This sequence belongs to the ATPase gamma chain family. In terms of assembly, F-type ATPases have 2 components, CF(1) - the catalytic core - and CF(0) - the membrane proton channel. CF(1) has five subunits: alpha(3), beta(3), gamma(1), delta(1), epsilon(1). CF(0) has three main subunits: a, b and c.

The protein resides in the cell inner membrane. In terms of biological role, produces ATP from ADP in the presence of a proton gradient across the membrane. The gamma chain is believed to be important in regulating ATPase activity and the flow of protons through the CF(0) complex. The polypeptide is ATP synthase gamma chain (Francisella tularensis subsp. tularensis (strain FSC 198)).